The primary structure comprises 56 residues: Chymotrypsin inhibitor (56 aa).

Disulfide bonds link cysteine 3/cysteine 36, cysteine 12/cysteine 32, cysteine 16/cysteine 28, cysteine 20/cysteine 56, and cysteine 38/cysteine 50. Residues 3–56 enclose the TIL domain; sequence CGPNEVFNTCGSACAPTCAQPKTRICTMQCRIGCQCQEGFLRNGEGACVLPENC.

The protein belongs to the serine protease inhibitor-like (TIL domain-containing) family.

The protein resides in the secreted. Functionally, chymotrypsin and cathepsin G inhibitor. This Apis mellifera (Honeybee) protein is Chymotrypsin inhibitor.